The primary structure comprises 868 residues: Cytosolic phospholipase A2 epsilon (868 aa).

The segment at 1-46 (MSLQASEGCPGLGTNVFVPQSPQTDEEGSRSGRSFSEFEDTQDLDT) is disordered. The C2 domain maps to 46–170 (TPGLPPFCPM…CFRKKTHVKF (125 aa)). D84, D90, D140, D142, and D148 together coordinate Ca(2+). One can recognise a PLA2c domain in the interval 324 to 856 (PCPETLDVRL…TLLQALRLAV (533 aa)). S412 serves as the catalytic Nucleophile. Catalysis depends on D700, which acts as the Proton acceptor. At S800 the chain carries Phosphoserine. Positions 857–868 (EKKKRLKGQCPS) are required for localization at membrane structures.

Ca(2+) is required as a cofactor.

The protein resides in the cytoplasm. The protein localises to the cytosol. It is found in the early endosome membrane. It localises to the lysosome membrane. Its subcellular location is the cell membrane. The enzyme catalyses a 1,2-diacyl-sn-glycero-3-phosphoethanolamine + a 1,2-diacyl-sn-glycero-3-phosphocholine = an N-acyl-1,2-diacyl-sn-glycero-3-phosphoethanolamine + a 2-acyl-sn-glycero-3-phosphocholine + H(+). It catalyses the reaction 1-hexadecanoyl-2-octadecanoyl-sn-glycero-3-phosphocholine + 1,2-di-(9Z-octadecenoyl)-sn-glycero-3-phosphoethanolamine = 2-octadecanoyl-sn-glycero-3-phosphocholine + N-hexadecanoyl-1,2-di-(9Z-octadecenoyl)-sn-glycero-3-phosphoethanolamine + H(+). It carries out the reaction 1-octadecanoyl-2-hexadecanoyl-sn-glycero-3-phosphocholine + 1,2-di-(9Z-octadecenoyl)-sn-glycero-3-phosphoethanolamine = N-octadecanoyl-1,2-di-(9Z-octadecenoyl)-sn-glycero-3-phosphoethanolamine + 2-hexadecanoyl-sn-glycero-3-phosphocholine + H(+). The catalysed reaction is 1,2-di-(9Z-octadecenoyl)-sn-glycero-3-phosphoethanolamine + 1,2-dihexadecanoyl-sn-glycero-3-phosphocholine = N-hexadecanoyl-1,2-di-(9Z-octadecenoyl)-sn-glycero-3-phosphoethanolamine + 2-hexadecanoyl-sn-glycero-3-phosphocholine + H(+). The enzyme catalyses 1,2-di-(5Z,8Z,11Z,14Z-eicosatetraenoyl)-sn-glycero-3-phosphocholine + 1,2-di-(9Z-octadecenoyl)-sn-glycero-3-phosphoethanolamine = N-(5Z,8Z,11Z,14Z-eicosatetraenoyl)-1,2-di-(9Z-octadecenoyl)-sn-glycero-3-phosphoethanolamine + 2-(5Z,8Z,11Z,14Z)-eicosatetraenoyl-sn-glycero-3-phosphocholine + H(+). It catalyses the reaction 2 1,2-di-(9Z-octadecenoyl)-sn-glycero-3-phosphoethanolamine = N,1,2-tri-(9Z-octadecenoyl)-sn-glycero-3-phosphoethanolamine + 2-(9Z-octadecenoyl)-sn-glycero-3-phosphoethanolamine + H(+). It carries out the reaction 1-(1Z-octadecenyl)-2-(9Z-octadecenoyl)-sn-glycero-3-phosphoethanolamine + 1,2-dihexadecanoyl-sn-glycero-3-phosphocholine = 1-O-(1Z-octadecenoyl)-2-(9Z-octadecenoyl)-sn-glycero-3-phospho-N-hexadecanoyl-ethanolamine + 2-hexadecanoyl-sn-glycero-3-phosphocholine + H(+). The catalysed reaction is a 1,2-diacyl-sn-glycero-3-phosphocholine + H2O = a 1-acyl-sn-glycero-3-phosphocholine + a fatty acid + H(+). The enzyme catalyses 1-hexadecanoyl-2-(5Z,8Z,11Z,14Z-eicosatetraenoyl)-sn-glycero-3-phosphocholine + H2O = 1-hexadecanoyl-sn-glycero-3-phosphocholine + (5Z,8Z,11Z,14Z)-eicosatetraenoate + H(+). It catalyses the reaction 1-hexadecanoyl-sn-glycero-3-phosphocholine + H2O = sn-glycerol 3-phosphocholine + hexadecanoate + H(+). Its activity is regulated as follows. Stimulated by cytosolic Ca(2+). Stimulated by anionic phospholipids such as phosphatidylserines, phosphatidates and phosphatidylinositols. Functionally, calcium-dependent N-acyltransferase involved in the biosynthesis of N-acyl ethanolamines (NAEs) in the brain. Transfers the sn-1 fatty acyl chain of phosphatidylcholine (fatty acyl donor) to the amine group of phosphatidylethanolamine (fatty acyl acceptor) to generate N-acyl phosphatidylethanolamine (NAPE). Similarly can use plasmenylethanolamine as a fatty acyl acceptor to form N-acyl plasmenylethanolamine (N-Acyl-PlsEt). Both NAPE and N-Acyl-PlsEt can serve as precursors of bioactive NAEs like N-arachidonoyl phosphatidylethanolamine also called anandamide. Has weak phospholipase A2 and lysophospholipase activities. Regulates intracellular membrane trafficking that requires modulation of membrane curvature as it occurs by enrichment in lysophospholipids. Promotes tubule formation involved in clathrin-independent endocytotic trafficking and cargo recycling. This is Cytosolic phospholipase A2 epsilon from Homo sapiens (Human).